Reading from the N-terminus, the 154-residue chain is Small ribosomal subunit protein uS9 (154 aa).

A disordered region spans residues 135–154 (KESKKYGLKKARKAPQYSKR). The span at 140-154 (YGLKKARKAPQYSKR) shows a compositional bias: basic residues.

It belongs to the universal ribosomal protein uS9 family.

The sequence is that of Small ribosomal subunit protein uS9 from Salinispora arenicola (strain CNS-205).